A 506-amino-acid chain; its full sequence is 2-isopropylmalate synthase (506 aa).

The Pyruvate carboxyltransferase domain occupies 4–266 (ILFMDTTLRD…EPSMTLKEIK (263 aa)). The Mn(2+) site is built by Asp-13, His-201, His-203, and Asn-237. Positions 390–506 (NITQLQVHFV…KLKSFIQLVK (117 aa)) are regulatory domain.

It belongs to the alpha-IPM synthase/homocitrate synthase family. LeuA type 1 subfamily. Homodimer. It depends on Mn(2+) as a cofactor.

It localises to the cytoplasm. It catalyses the reaction 3-methyl-2-oxobutanoate + acetyl-CoA + H2O = (2S)-2-isopropylmalate + CoA + H(+). The protein operates within amino-acid biosynthesis; L-leucine biosynthesis; L-leucine from 3-methyl-2-oxobutanoate: step 1/4. In terms of biological role, catalyzes the condensation of the acetyl group of acetyl-CoA with 3-methyl-2-oxobutanoate (2-ketoisovalerate) to form 3-carboxy-3-hydroxy-4-methylpentanoate (2-isopropylmalate). In Bacillus cereus (strain ATCC 10987 / NRS 248), this protein is 2-isopropylmalate synthase.